The sequence spans 169 residues: MYTSGYANRSSSFPTTTHNAARAATENAAAGLVSEVVYHEDQPMMAQLLLLPLLRHLGQQSRWQLWLTPQQKLSREWVQSAGLPLTKVMQISQLAPPHTLESMIRALRTGNYSVVIGWLTEELTEEEHASLVEAANVGNAVGFIMRPVRAHALPRRQHSGLKIHSNLYH.

Positions 106 to 112 (ALRTGNY) are ftsZ binding. A lon protease binding region spans residues 162–169 (KIHSNLYH).

Belongs to the SulA family. In terms of assembly, interacts with FtsZ. Is rapidly cleaved and degraded by the Lon protease once DNA damage is repaired.

Component of the SOS system and an inhibitor of cell division. Accumulation of SulA causes rapid cessation of cell division and the appearance of long, non-septate filaments. In the presence of GTP, binds a polymerization-competent form of FtsZ in a 1:1 ratio, thus inhibiting FtsZ polymerization and therefore preventing it from participating in the assembly of the Z ring. This mechanism prevents the premature segregation of damaged DNA to daughter cells during cell division. The polypeptide is Cell division inhibitor SulA (Salmonella arizonae (strain ATCC BAA-731 / CDC346-86 / RSK2980)).